The following is a 661-amino-acid chain: Probable potassium transport system protein Kup 1 (661 aa).

Positions 1–11 (MKGLFPAGGGN) are enriched in gly residues. The segment at 1-38 (MKGLFPAGGGNPPSSYLSRFLPHRKERSPENVTSGRNG) is disordered. Transmembrane regions (helical) follow at residues 48–68 (LALG…LYTI), 85–105 (IMGV…IKYI), 139–159 (AVVV…GFIT), 177–197 (AAKN…FLVQ), 207–227 (IFGP…LLCI), 251–271 (VHGL…EALY), 286–306 (WFAM…AALL), 324–344 (LLLP…QAMI), 384–404 (LMMV…GLAG), 405–425 (AYGV…FFVA), 436–456 (TAPL…SNLL), and 458–478 (FFDG…VMAS).

It belongs to the HAK/KUP transporter (TC 2.A.72) family.

It is found in the cell inner membrane. It catalyses the reaction K(+)(in) + H(+)(in) = K(+)(out) + H(+)(out). Its function is as follows. Transport of potassium into the cell. Likely operates as a K(+):H(+) symporter. The protein is Probable potassium transport system protein Kup 1 of Syntrophobacter fumaroxidans (strain DSM 10017 / MPOB).